Reading from the N-terminus, the 177-residue chain is Large ribosomal subunit protein uL30 (177 aa).

The protein belongs to the universal ribosomal protein uL30 family. As to quaternary structure, part of the 50S ribosomal subunit.

The polypeptide is Large ribosomal subunit protein uL30 (Pyrobaculum islandicum (strain DSM 4184 / JCM 9189 / GEO3)).